The sequence spans 116 residues: NADH-ubiquinone oxidoreductase chain 3 (116 aa).

3 helical membrane-spanning segments follow: residues 3–23 (LVTT…TISF), 56–76 (FFLI…LLPL), and 84–104 (APTL…LGLI).

Belongs to the complex I subunit 3 family.

The protein resides in the mitochondrion membrane. The enzyme catalyses a ubiquinone + NADH + 5 H(+)(in) = a ubiquinol + NAD(+) + 4 H(+)(out). Core subunit of the mitochondrial membrane respiratory chain NADH dehydrogenase (Complex I) that is believed to belong to the minimal assembly required for catalysis. Complex I functions in the transfer of electrons from NADH to the respiratory chain. The immediate electron acceptor for the enzyme is believed to be ubiquinone. The protein is NADH-ubiquinone oxidoreductase chain 3 (MT-ND3) of Oncorhynchus nerka (Sockeye salmon).